Reading from the N-terminus, the 196-residue chain is Chorion protein S19 (196 aa).

The signal sequence occupies residues 1-16 (MNTFATLAIFISACLA).

Belongs to the chorion protein S19 family.

It localises to the secreted. In terms of biological role, chorion membrane (egg shell) protein; plays a role in protecting the egg from the environment. The polypeptide is Chorion protein S19 (Cp19) (Drosophila grimshawi (Hawaiian fruit fly)).